Reading from the N-terminus, the 394-residue chain is 4-hydroxyphenylpyruvate dioxygenase (394 aa).

VOC domains lie at 18-149 and 181-339; these read SFHH…LLEY and FIDH…IFTK. Fe cation is bound by residues histidine 184, histidine 267, and glutamate 350.

It belongs to the 4HPPD family. As to quaternary structure, homodimer. The cofactor is Fe cation.

The protein resides in the cytoplasm. Its subcellular location is the endoplasmic reticulum membrane. It is found in the golgi apparatus membrane. The catalysed reaction is 3-(4-hydroxyphenyl)pyruvate + O2 = homogentisate + CO2. The protein operates within amino-acid degradation; L-phenylalanine degradation; acetoacetate and fumarate from L-phenylalanine: step 3/6. Catalyzes the conversion of 4-hydroxyphenylpyruvic acid to homogentisic acid, one of the steps in tyrosine catabolism. In Xenopus tropicalis (Western clawed frog), this protein is 4-hydroxyphenylpyruvate dioxygenase (hpd).